Here is a 723-residue protein sequence, read N- to C-terminus: uncharacterized protein (723 aa).

Residues 1 to 12 (MTGKKKNRHQKK) are compositionally biased toward basic residues. Disordered stretches follow at residues 1-166 (MTGK…EKEI), 181-212 (IKRKKEKKVKPQPVQPTPPVPAPAPQQSSGWG), 268-289 (LPLSDTEDSDNDNDNGGDDNDN), and 391-455 (KNKS…NTST). Residues 30 to 42 (DETTTTTTTTTTT) are compositionally biased toward low complexity. 2 stretches are compositionally biased toward basic and acidic residues: residues 45–129 (EETK…KTDD) and 149–166 (TDIKDEKKEEKKKVEKEI). Residues 53–173 (IVENKDEDKK…KEIEDPNKKY (121 aa)) adopt a coiled-coil conformation. The segment covering 181–190 (IKRKKEKKVK) has biased composition (basic residues). Over residues 193-204 (PVQPTPPVPAPA) the composition is skewed to pro residues. Positions 272–288 (DTEDSDNDNDNGGDDND) are enriched in acidic residues. Positions 397-455 (DENNNNNNNNNQQQPQQQQTTSPTLSTSPTSPKSPTTTTTNTTTTTTTNTNNNNNNTST) are enriched in low complexity.

This is an uncharacterized protein from Dictyostelium discoideum (Social amoeba).